The following is a 226-amino-acid chain: Ribonuclease 3 (226 aa).

Residues isoleucine 2 to glycine 129 enclose the RNase III domain. Glutamate 42 contributes to the Mg(2+) binding site. Aspartate 46 is a catalytic residue. Positions 115 and 118 each coordinate Mg(2+). Residue glutamate 118 is part of the active site. Residues aspartate 154–aspartate 223 form the DRBM domain.

The protein belongs to the ribonuclease III family. As to quaternary structure, homodimer. The cofactor is Mg(2+).

It localises to the cytoplasm. It catalyses the reaction Endonucleolytic cleavage to 5'-phosphomonoester.. Functionally, digests double-stranded RNA. Involved in the processing of primary rRNA transcript to yield the immediate precursors to the large and small rRNAs (23S and 16S). Processes some mRNAs, and tRNAs when they are encoded in the rRNA operon. Processes pre-crRNA and tracrRNA of type II CRISPR loci if present in the organism. The polypeptide is Ribonuclease 3 (Ehrlichia canis (strain Jake)).